The sequence spans 479 residues: Anaerobic nitric oxide reductase flavorubredoxin (479 aa).

Residues 30–210 are zinc metallo-hydrolase; that stretch reads LRGSSYNSYL…PFSRLVTPKI (181 aa). His79, Glu81, Asp83, His147, Asp166, and His227 together coordinate Fe cation. The region spanning 254–393 is the Flavodoxin-like domain; sequence ITIFYDTMSN…LCREHGREIA (140 aa). Residues 260–264 and 342–369 contribute to the FMN site; these read TMSNN and AFGSHGWSGGAVDRLSTRLQDAGFEMSL. The Rubredoxin-like domain occupies 423 to 474; that stretch reads GPRMQCSVCQWIYDPAKGEPMQDVAPGTPWSEVPDNFLCPECSLGKDVFDEL. Residues Cys428, Cys431, Cys461, and Cys464 each coordinate Fe cation.

In the N-terminal section; belongs to the zinc metallo-hydrolase group 3 family. Homotetramer. The cofactor is Fe cation. FMN serves as cofactor.

The protein resides in the cytoplasm. It participates in nitrogen metabolism; nitric oxide reduction. In terms of biological role, anaerobic nitric oxide reductase; uses NADH to detoxify nitric oxide (NO), protecting several 4Fe-4S NO-sensitive enzymes. Has at least 2 reductase partners, only one of which (NorW, flavorubredoxin reductase) has been identified. NO probably binds to the di-iron center; electrons enter from the NorW at rubredoxin and are transferred sequentially to the FMN center and the di-iron center. Also able to function as an aerobic oxygen reductase. In Shigella sonnei (strain Ss046), this protein is Anaerobic nitric oxide reductase flavorubredoxin.